The sequence spans 177 residues: Shikimate kinase (177 aa).

Residue 14 to 19 participates in ATP binding; that stretch reads GSGKST. Residue Ser18 participates in Mg(2+) binding. Asp36, Arg60, and Gly82 together coordinate substrate. Position 120 (Arg120) interacts with ATP. Position 139 (Arg139) interacts with substrate.

Belongs to the shikimate kinase family. As to quaternary structure, monomer. The cofactor is Mg(2+).

It is found in the cytoplasm. The enzyme catalyses shikimate + ATP = 3-phosphoshikimate + ADP + H(+). It functions in the pathway metabolic intermediate biosynthesis; chorismate biosynthesis; chorismate from D-erythrose 4-phosphate and phosphoenolpyruvate: step 5/7. Functionally, catalyzes the specific phosphorylation of the 3-hydroxyl group of shikimic acid using ATP as a cosubstrate. In Gloeobacter violaceus (strain ATCC 29082 / PCC 7421), this protein is Shikimate kinase.